A 338-amino-acid chain; its full sequence is uncharacterized protein (338 aa).

A helical membrane pass occupies residues Ile20–Leu40.

It is found in the membrane. This is an uncharacterized protein from Schizosaccharomyces pombe (strain 972 / ATCC 24843) (Fission yeast).